The sequence spans 261 residues: Phosphatidylglycerol--prolipoprotein diacylglyceryl transferase (261 aa).

Transmembrane regions (helical) follow at residues 20-40, 54-74, and 94-114; these read LAIHWYAIFIVGGAALAVWLA, IIDFVLFAFPLGIVGARLYYV, and GGGAIYGSLIAGAIVLFVFSY. Arg-139 provides a ligand contact to a 1,2-diacyl-sn-glycero-3-phospho-(1'-sn-glycerol). 3 consecutive transmembrane segments (helical) span residues 175–195, 205–225, and 235–255; these read MPTFLFESIGTLSGFILVMVF, GDIFSFYLVWYGAVRFIVEGM, and ARVSQWLSVLLVIVGLVLFIY.

It belongs to the Lgt family.

Its subcellular location is the cell membrane. The catalysed reaction is L-cysteinyl-[prolipoprotein] + a 1,2-diacyl-sn-glycero-3-phospho-(1'-sn-glycerol) = an S-1,2-diacyl-sn-glyceryl-L-cysteinyl-[prolipoprotein] + sn-glycerol 1-phosphate + H(+). It participates in protein modification; lipoprotein biosynthesis (diacylglyceryl transfer). Catalyzes the transfer of the diacylglyceryl group from phosphatidylglycerol to the sulfhydryl group of the N-terminal cysteine of a prolipoprotein, the first step in the formation of mature lipoproteins. This is Phosphatidylglycerol--prolipoprotein diacylglyceryl transferase from Lactococcus lactis subsp. lactis (strain IL1403) (Streptococcus lactis).